We begin with the raw amino-acid sequence, 769 residues long: Intron Large complex component GCFC2 (769 aa).

Disordered stretches follow at residues 1–122 and 134–212; these read MALR…PIVE and RKRE…DENQ. Residues Ser16, Ser17, Ser19, and Ser85 each carry the phosphoserine modification. Position 86 is a phosphothreonine (Thr86). 2 positions are modified to phosphoserine: Ser118 and Ser169. The segment covering 190–201 has biased composition (basic and acidic residues); sequence RMAEETSIRSEE. Residues 202 to 212 show a composition bias toward acidic residues; sequence SSEESQEDENQ. Phosphoserine occurs at positions 203 and 206. The stretch at 256–308 forms a coiled coil; that stretch reads NLEIIKKQLNNRLTLLQESHRSHQREYEKYEQDIKSSKTAIQNLESASDHAQN.

Belongs to the GCF family. Found in the Intron Large (IL) complex, a post-mRNA release spliceosomal complex containing the excised intron, U2, U5 and U6 snRNPs, and splicing factors. Interacts with TFIP11 and DHX15.

The protein resides in the nucleus. Its subcellular location is the nucleoplasm. The protein localises to the nucleolus. Its function is as follows. Involved in pre-mRNA splicing through regulating spliceosome C complex formation. May play a role during late-stage splicing events and turnover of excised introns. The sequence is that of Intron Large complex component GCFC2 (Gcfc2) from Mus musculus (Mouse).